The following is a 1209-amino-acid chain: Putative lysine-specific demethylase JMJ16 (1209 aa).

The JmjN domain occupies alanine 146–proline 187. A Nuclear localization signal motif is present at residues methionine 217–proline 224. In terms of domain architecture, JmjC spans lysine 361 to cysteine 527. The Fe cation site is built by histidine 407, glutamate 409, and histidine 495. 8 residues coordinate Zn(2+): cysteine 617, cysteine 620, cysteine 631, cysteine 633, cysteine 640, histidine 643, cysteine 648, and cysteine 650. A C5HC2 zinc finger spans residues cysteine 617–asparagine 667. Positions aspartate 872 to valine 900 are disordered. Positions asparagine 875–glutamine 884 are enriched in polar residues. The FYR N-terminal domain occupies valine 974–alanine 1032. Positions arginine 1034 to arginine 1124 constitute an FYR C-terminal domain.

It belongs to the JARID1 histone demethylase family. Interacts with MMD1 in the nucleus of male meiocytes, especially on pachytene chromosomes. Requires Fe(2+) as cofactor. As to expression, confined to inflorescences.

The protein localises to the nucleus. It carries out the reaction N(6),N(6),N(6)-trimethyl-L-lysyl(4)-[histone H3] + 2-oxoglutarate + O2 = N(6),N(6)-dimethyl-L-lysyl(4)-[histone H3] + formaldehyde + succinate + CO2. It catalyses the reaction N(6),N(6)-dimethyl-L-lysyl(4)-[histone H3] + 2-oxoglutarate + O2 = N(6)-methyl-L-lysyl(4)-[histone H3] + formaldehyde + succinate + CO2. The enzyme catalyses N(6)-methyl-L-lysyl(4)-[histone H3] + 2-oxoglutarate + O2 = L-lysyl(4)-[histone H3] + formaldehyde + succinate + CO2. Its function is as follows. Functions as a histone H3 'Lys-4' (H3K4me) demethylase involved in the negative regulation of gene expression. Active on H3K4me1, H3K4me2 and H3K4me3. Not active on mono-, di- and trimethylated H3K9, H3K27 and H3K36 in somatic cells. However, also active on H3K9 when in complex with MMD1, a meiocyte-specific histone reader. Together with MMD1, promotes gene expression in male meiocytes in an H3K9me3-dependent manner, and contributes to meiotic chromosome condensation by triggering some condensin promoters (e.g. CAP-D3 and CAP-H). Together with JMJ14 and JMJ17, required for plant growth and development. Represses leaf senescence in an age-dependent manner by demethylating H3K4me3 activating histone marks at senescence-associated genes (SAGs) loci, including WRKY53 and SAG201, thus preventing their premature expression. This Arabidopsis thaliana (Mouse-ear cress) protein is Putative lysine-specific demethylase JMJ16.